The following is a 171-amino-acid chain: Galectin-related protein A (171 aa).

The 133-residue stretch at 38 to 170 (PFCGHIKGGL…INGDLQLTKL (133 aa)) folds into the Galectin domain.

Its function is as follows. Does not bind lactose, and may not bind carbohydrates. This Xenopus laevis (African clawed frog) protein is Galectin-related protein A (lgalsl-a).